The following is a 566-amino-acid chain: Chaperonin GroEL 1 (566 aa).

ATP contacts are provided by residues 29 to 32, 86 to 90, Gly413, and Asp492; these read TIGP and DGTTT. Positions 520-540 are disordered; it reads DKPEPPAPAGDGGGDPMGGMG. Residues 529–540 show a composition bias toward gly residues; sequence GDGGGDPMGGMG.

The protein belongs to the chaperonin (HSP60) family. In terms of assembly, forms a cylinder of 14 subunits composed of two heptameric rings stacked back-to-back. Interacts with the co-chaperonin GroES.

The protein resides in the cytoplasm. The enzyme catalyses ATP + H2O + a folded polypeptide = ADP + phosphate + an unfolded polypeptide.. Its function is as follows. Together with its co-chaperonin GroES, plays an essential role in assisting protein folding. The GroEL-GroES system forms a nano-cage that allows encapsulation of the non-native substrate proteins and provides a physical environment optimized to promote and accelerate protein folding. The chain is Chaperonin GroEL 1 from Prochlorococcus marinus (strain MIT 9313).